A 316-amino-acid polypeptide reads, in one-letter code: Olfactory receptor 1165 (316 aa).

Residues 1-28 (MMLDLGNESSVTMFILSGFSEYPHLHAP) are Extracellular-facing. Asn-7 carries an N-linked (GlcNAc...) asparagine glycan. A helical transmembrane segment spans residues 29 to 50 (LFLLFFMIYTVTLIGNLGIIVV). Topologically, residues 51-61 (RKVNPKLHTPM) are cytoplasmic. A helical membrane pass occupies residues 62-80 (YFFLSHLSFLDICYSSVFT). Residues 81–99 (PKLLEILIVEDRTISFKGC) lie on the Extracellular side of the membrane. An intrachain disulfide couples Cys-99 to Cys-181. The chain crosses the membrane as a helical span at residues 100–122 (MTQFFLICAFVITEMFMLAVMAY). Topologically, residues 123–141 (DRFVAVCNPLLYTVSMSPK) are cytoplasmic. The chain crosses the membrane as a helical span at residues 142–166 (LCAFLVAGTYMWGVLCSLTITYSLL). Over 167–205 (QLSYCGPNIINHFGCEYSAILSLSCSDPTFSQVVCLTIS) the chain is Extracellular. Residues 206–228 (IFNETCSLLIILASYVFIVVTII) traverse the membrane as a helical segment. Residues 229–239 (KMPSKGGLQKA) are Cytoplasmic-facing. A helical membrane pass occupies residues 240 to 263 (FSTCSSHLTAISIFHGIILLLYCV). Over 264-268 (PNSKN) the chain is Extracellular. The chain crosses the membrane as a helical span at residues 269-291 (SWLVVKVATVLFTVMIPMLNPLI). Over 292-316 (YSLRNKDVKGTVSRLMHLKLQAHST) the chain is Cytoplasmic.

The protein belongs to the G-protein coupled receptor 1 family.

The protein localises to the cell membrane. Its function is as follows. Olfactory receptor. The chain is Olfactory receptor 1165 from Mus musculus (Mouse).